The sequence spans 594 residues: Probable methylenetetrahydrofolate reductase (NADH) (594 aa).

Catalysis depends on Glu-21, which acts as the Proton donor/acceptor. NAD(+) contacts are provided by residues 21–26 and 52–53; these read EYFPPK and TW. FAD is bound by residues 52-53, His-81, 111-113, Tyr-153, 157-160, Asp-175, and Lys-182; these read TW, RGD, and HPDA. Substrate is bound at residue Asp-113. The substrate site is built by Gln-193 and Tyr-285.

This sequence belongs to the methylenetetrahydrofolate reductase family. As to quaternary structure, homodimer. It depends on FAD as a cofactor.

It catalyses the reaction (6S)-5-methyl-5,6,7,8-tetrahydrofolate + NAD(+) = (6R)-5,10-methylene-5,6,7,8-tetrahydrofolate + NADH + H(+). The protein operates within one-carbon metabolism; tetrahydrofolate interconversion. With respect to regulation, plant MTHFRs strongly prefer NADH over NADPH. Not inhibited by methionine or S-adenosylmethionine. The probable reversibility of the MTHFR reaction in plants suggests that they can metabolize the methyl group of 5,10-methylenetetrahydrofolate to serine, sugars and starch. The polypeptide is Probable methylenetetrahydrofolate reductase (NADH) (Oryza sativa subsp. japonica (Rice)).